Reading from the N-terminus, the 457-residue chain is Cystathionine beta-lyase, chloroplastic (457 aa).

A chloroplast-targeting transit peptide spans Met1–Cys51. The pyridoxal 5'-phosphate site is built by Tyr120, Arg122, Gly150, Met151, Ser268, and Thr270. Lys271 is modified (N6-(pyridoxal phosphate)lysine).

Belongs to the trans-sulfuration enzymes family. As to quaternary structure, forms homodimers. May form homotetramers from two homodimers. Requires pyridoxal 5'-phosphate as cofactor.

Its subcellular location is the plastid. The protein resides in the chloroplast. It catalyses the reaction L,L-cystathionine + H2O = L-homocysteine + pyruvate + NH4(+). The enzyme catalyses an S-substituted L-cysteine + H2O = a thiol + pyruvate + NH4(+). Its function is as follows. Catalyzes the degradation of cystathionine. The protein is Cystathionine beta-lyase, chloroplastic of Mimosa pudica (Sensitive plant).